Reading from the N-terminus, the 79-residue chain is Cytochrome b (79 aa).

3 helical membrane-spanning segments follow: residues Thr-1 to Ala-7, Trp-31 to Ile-52, and Trp-67 to Ala-79. Residues His-37 and His-51 each contribute to the heme b site.

Belongs to the cytochrome b family. In terms of assembly, the cytochrome bc1 complex contains 11 subunits: 3 respiratory subunits (MT-CYB, CYC1 and UQCRFS1), 2 core proteins (UQCRC1 and UQCRC2) and 6 low-molecular weight proteins (UQCRH/QCR6, UQCRB/QCR7, UQCRQ/QCR8, UQCR10/QCR9, UQCR11/QCR10 and a cleavage product of UQCRFS1). This cytochrome bc1 complex then forms a dimer. Requires heme b as cofactor.

It localises to the mitochondrion inner membrane. In terms of biological role, component of the ubiquinol-cytochrome c reductase complex (complex III or cytochrome b-c1 complex) that is part of the mitochondrial respiratory chain. The b-c1 complex mediates electron transfer from ubiquinol to cytochrome c. Contributes to the generation of a proton gradient across the mitochondrial membrane that is then used for ATP synthesis. The chain is Cytochrome b (MT-CYB) from Pomatostomus superciliosus (White-browed babbler).